A 245-amino-acid polypeptide reads, in one-letter code: 1-(5-phosphoribosyl)-5-[(5-phosphoribosylamino)methylideneamino] imidazole-4-carboxamide isomerase (245 aa).

Residue aspartate 8 is the Proton acceptor of the active site. The active-site Proton donor is aspartate 130.

Belongs to the HisA/HisF family.

Its subcellular location is the cytoplasm. It catalyses the reaction 1-(5-phospho-beta-D-ribosyl)-5-[(5-phospho-beta-D-ribosylamino)methylideneamino]imidazole-4-carboxamide = 5-[(5-phospho-1-deoxy-D-ribulos-1-ylimino)methylamino]-1-(5-phospho-beta-D-ribosyl)imidazole-4-carboxamide. It functions in the pathway amino-acid biosynthesis; L-histidine biosynthesis; L-histidine from 5-phospho-alpha-D-ribose 1-diphosphate: step 4/9. In Pseudomonas syringae pv. tomato (strain ATCC BAA-871 / DC3000), this protein is 1-(5-phosphoribosyl)-5-[(5-phosphoribosylamino)methylideneamino] imidazole-4-carboxamide isomerase.